We begin with the raw amino-acid sequence, 257 residues long: MALKALILNTTLRRSPSRSQTQGLIDKAVPLYEKEGIETEVVRVIDHDIEQEYWDDYDDWNAGEKARREDEWPWLLEKIREADILVIATPITLNMCTSAAHVILEKLNLMDELNGDTKQFPLYNKVAGLLMCGNEDGAHHVAGTVLNNLGRLGYSVPPNAAAYWLGPAGTGPGYIEGKGDRHFHTNKLIRFMVANTSHLARMLQETPYTTDLEACAQAAREESDDVFAIRVNVNTPAIRYKRFQKLGEVKVEESQLG.

FMN is bound by residues 11-13 (TLR), 19-21 (SQT), 91-94 (ITLN), 132-136 (CGNED), and Tyr-240.

This sequence belongs to the SsuE family. As to quaternary structure, homotetramer.

It catalyses the reaction FMN + L-glutamate + 3 A + O2 + H2O = 8-amino-8-demethylriboflavin 5'-phosphate + 2-oxoglutarate + 3 AH2 + CO2 + H(+). It participates in antibiotic biosynthesis. In terms of biological role, involved in the biosynthesis of the riboflavin analog antibiotic roseoflavin (3,8-dimethylamino-riboflavin). Catalyzes the site-specific substitution of the C-8 methyl group of riboflavin-5'-phosphate (FMN) by an amino group to yield 8-amino-8-demethylriboflavin 5'-phosphate, via a combined oxidation, decarboxylation and transamination reaction. The catalysis is initiated by an oxidation step in which the C-8 methyl group on the dimethylbenzene ring of FMN is converted to a formyl group to yield the 8-demethyl-8-formylriboflavin-5'-phosphate (OHC-RP) intermediate. In the presence of thiamine, the formyl group is oxidized into a carboxyl group to yield the 8-demethyl-8-carboxyriboflavin-5'-phosphate (HO2C-RP) intermediate. Finally, in the presence of L-glutamate as an amino donor, decarboxylation and aminotransfer occur, resulting in production of 8-demethyl-8-aminoriboflavin-5'-phosphate. Addition of NAD (but not NADP) to the reaction increases the yield 1.7-fold. The reaction also proceeds without the addition of any electron acceptor, and it is possible that molecular oxygen serves this role. In Streptomyces davaonensis (strain DSM 101723 / JCM 4913 / KCC S-0913 / 768), this protein is 8-demethyl-8-aminoriboflavin-5'-phosphate synthase.